A 408-amino-acid chain; its full sequence is Glutamate N-acetyltransferase (408 aa).

Positions 150, 176, 189, 271, 403, and 408 each coordinate substrate. Catalysis depends on Thr-189, which acts as the Nucleophile.

This sequence belongs to the ArgJ family. As to quaternary structure, heterotetramer of two alpha and two beta chains.

The protein resides in the cytoplasm. The catalysed reaction is N(2)-acetyl-L-ornithine + L-glutamate = N-acetyl-L-glutamate + L-ornithine. It participates in amino-acid biosynthesis; L-arginine biosynthesis; L-ornithine and N-acetyl-L-glutamate from L-glutamate and N(2)-acetyl-L-ornithine (cyclic): step 1/1. Its function is as follows. Catalyzes the transfer of the acetyl group from N(2)-acetylornithine to glutamate, forming N-acetylglutamate and L-ornithine. In Methanococcus maripaludis (strain C5 / ATCC BAA-1333), this protein is Glutamate N-acetyltransferase.